Here is an 89-residue protein sequence, read N- to C-terminus: MQACMVPGLALCLLLGPLAGAKPVQEEGDPYAELPAMPYWPFSTSDFWNYVQHFQALGAYPQIEDMARTFFAHFPLGSTLGFHVPYQED.

Positions 1–21 are cleaved as a signal peptide; sequence MQACMVPGLALCLLLGPLAGA.

The protein belongs to the otospiralin family. In terms of tissue distribution, ear specific.

Its subcellular location is the secreted. In terms of biological role, may be essential for the survival of the neurosensory epithelium of the inner ear. This Homo sapiens (Human) protein is Otospiralin (OTOS).